A 201-amino-acid polypeptide reads, in one-letter code: Natural cytotoxicity triggering receptor 3 (201 aa).

A signal peptide spans 1 to 18 (MAWMLLLILIMVYPGSCA). Residues 19–126 (LWVSQPPEIR…VGTGNGTRLV (108 aa)) form the Ig-like domain. The Extracellular portion of the chain corresponds to 19–133 (LWVSQPPEIR…RLVVEKEYPQ (115 aa)). C39 and C108 are joined by a disulfide. N-linked (GlcNAc...) asparagine glycans are attached at residues N42 and N121. A helical transmembrane segment spans residues 134-154 (LGAGTVLLLRAGFYAVSFLSV). At 155–201 (AMGSTLYYQGKCLTWKGPRRQLPAVVPGPLPPPCGSSAHLLPPVPGG) the chain is on the cytoplasmic side.

It belongs to the natural cytotoxicity receptor (NCR) family. In terms of assembly, homodimer in the unliganted form. Interacts with CD3Z. Interacts with and is activated by binding to NCR3LG1. Interacts with and is activated by binding to BAG6. Interacts with and is inhibited by binding to LGALS3.

The protein resides in the cell membrane. Cell membrane receptor of natural killer/NK cells that is activated by binding of extracellular ligands including BAG6 and NCR3LG1. Stimulates NK cells cytotoxicity toward neighboring cells producing these ligands. It controls, for instance, NK cells cytotoxicity against tumor cells. Engagement of NCR3 by BAG6 also promotes myeloid dendritic cells (DC) maturation, both through killing DCs that did not acquire a mature phenotype, and inducing the release by NK cells of TNFA and IFNG that promote DC maturation. This Macaca mulatta (Rhesus macaque) protein is Natural cytotoxicity triggering receptor 3 (NCR3).